Reading from the N-terminus, the 169-residue chain is NADH-quinone oxidoreductase subunit B (169 aa).

[4Fe-4S] cluster is bound by residues Cys-42, Cys-43, Cys-107, and Cys-136.

The protein belongs to the complex I 20 kDa subunit family. As to quaternary structure, NDH-1 is composed of 14 different subunits. Subunits NuoB, C, D, E, F, and G constitute the peripheral sector of the complex. [4Fe-4S] cluster is required as a cofactor.

The protein localises to the cell inner membrane. The catalysed reaction is a quinone + NADH + 5 H(+)(in) = a quinol + NAD(+) + 4 H(+)(out). Its function is as follows. NDH-1 shuttles electrons from NADH, via FMN and iron-sulfur (Fe-S) centers, to quinones in the respiratory chain. Couples the redox reaction to proton translocation (for every two electrons transferred, four hydrogen ions are translocated across the cytoplasmic membrane), and thus conserves the redox energy in a proton gradient. This chain is NADH-quinone oxidoreductase subunit B, found in Campylobacter hominis (strain ATCC BAA-381 / DSM 21671 / CCUG 45161 / LMG 19568 / NCTC 13146 / CH001A).